Here is a 446-residue protein sequence, read N- to C-terminus: Chromosomal replication initiator protein DnaA (446 aa).

The interval 1 to 81 (MENISDLWNS…AKLAIRFIIP (81 aa)) is domain I, interacts with DnaA modulators. Residues 81–109 (PQSQAEEDIDLPPVKPNPAQDDSAHLPQS) are domain II. The tract at residues 110–326 (MLNPKYTFDT…GALIRVVAYS (217 aa)) is domain III, AAA+ region. ATP is bound by residues G154, G156, K157, and T158. Positions 327 to 446 (SLINKDINAD…QVEEINGILK (120 aa)) are domain IV, binds dsDNA.

It belongs to the DnaA family. Oligomerizes as a right-handed, spiral filament on DNA at oriC.

Its subcellular location is the cytoplasm. In terms of biological role, plays an essential role in the initiation and regulation of chromosomal replication. ATP-DnaA binds to the origin of replication (oriC) to initiate formation of the DNA replication initiation complex once per cell cycle. Binds the DnaA box (a 9 base pair repeat at the origin) and separates the double-stranded (ds)DNA. Forms a right-handed helical filament on oriC DNA; dsDNA binds to the exterior of the filament while single-stranded (ss)DNA is stabiized in the filament's interior. The ATP-DnaA-oriC complex binds and stabilizes one strand of the AT-rich DNA unwinding element (DUE), permitting loading of DNA polymerase. After initiation quickly degrades to an ADP-DnaA complex that is not apt for DNA replication. Binds acidic phospholipids. The chain is Chromosomal replication initiator protein DnaA from Bacillus cereus (strain B4264).